Here is a 23-residue protein sequence, read N- to C-terminus: Acidic phospholipase A2 Ts-A2 (23 aa).

The cofactor is Ca(2+). Post-translationally, contains 7 disulfide bonds. As to expression, expressed by the venom gland.

Its subcellular location is the secreted. It catalyses the reaction a 1,2-diacyl-sn-glycero-3-phosphocholine + H2O = a 1-acyl-sn-glycero-3-phosphocholine + a fatty acid + H(+). Its function is as follows. Exhibits moderate hydrolytic activities and prefers the anionic micelles (dPPC with deoxycholate) to the zwitterionic micelles (dPPC with Triton X-100). PLA2 catalyzes the calcium-dependent hydrolysis of the 2-acyl groups in 3-sn-phosphoglycerides. In Trimeresurus stejnegeri (Chinese green tree viper), this protein is Acidic phospholipase A2 Ts-A2.